Consider the following 66-residue polypeptide: MAKDAITGARTRFGNQRSHALNSSRRSWKPNLQKVTVKINGAAPKKVYLTARTLKAGLKNGSIERV.

Positions 1–26 (MAKDAITGARTRFGNQRSHALNSSRR) are disordered. Positions 13-25 (FGNQRSHALNSSR) are enriched in polar residues.

It belongs to the bacterial ribosomal protein bL28 family.

The polypeptide is Large ribosomal subunit protein bL28 (Leuconostoc mesenteroides subsp. mesenteroides (strain ATCC 8293 / DSM 20343 / BCRC 11652 / CCM 1803 / JCM 6124 / NCDO 523 / NBRC 100496 / NCIMB 8023 / NCTC 12954 / NRRL B-1118 / 37Y)).